We begin with the raw amino-acid sequence, 159 residues long: Nudix hydrolase DR_1025 (159 aa).

Residues M1, R14, and S49 each contribute to the Mg(2+) site. 1 to 6 (MEHDER) contacts ATP. One can recognise a Nudix hydrolase domain in the interval 11–144 (VELRAAGVVL…QIRMYQTKLF (134 aa)). 50-51 (GA) contributes to the ATP binding site. The Nudix box motif lies at 50–71 (GAVEDGENPQDAAVREACEETG). Mg(2+) is bound by residues E53 and E65. 87–89 (FPD) contributes to the ATP binding site. Mg(2+) is bound at residue R95.

This sequence belongs to the Nudix hydrolase family. As to quaternary structure, homodimer. Mg(2+) is required as a cofactor.

It catalyses the reaction 8-oxo-dGTP + H2O = 8-oxo-dGDP + phosphate + H(+). The catalysed reaction is 8-oxo-GTP + H2O = 8-oxo-GDP + phosphate + H(+). The enzyme catalyses P(1),P(4)-bis(5'-adenosyl) tetraphosphate + H2O = AMP + ATP + 2 H(+). Functionally, hydrolase that can act as a nucleoside triphosphatase and a dinucleoside polyphosphate pyrophosphatase. The best substrates are 8-oxo-dGTP and 8-oxo-GTP. Other substrates include Ap4A, dGTP and GTP. May be involved in protection from damage caused by radiation. This Deinococcus radiodurans (strain ATCC 13939 / DSM 20539 / JCM 16871 / CCUG 27074 / LMG 4051 / NBRC 15346 / NCIMB 9279 / VKM B-1422 / R1) protein is Nudix hydrolase DR_1025.